Here is a 295-residue protein sequence, read N- to C-terminus: N-acetylmuramic acid 6-phosphate etherase (295 aa).

Residues 53 to 216 (AIQRFNNGGR…STMTMIGVGK (164 aa)) form the SIS domain. The active-site Proton donor is the glutamate 81. Residue glutamate 112 is part of the active site.

It belongs to the GCKR-like family. MurNAc-6-P etherase subfamily. In terms of assembly, homodimer.

The enzyme catalyses N-acetyl-D-muramate 6-phosphate + H2O = N-acetyl-D-glucosamine 6-phosphate + (R)-lactate. It participates in amino-sugar metabolism; N-acetylmuramate degradation. Functionally, specifically catalyzes the cleavage of the D-lactyl ether substituent of MurNAc 6-phosphate, producing GlcNAc 6-phosphate and D-lactate. In Staphylococcus epidermidis (strain ATCC 35984 / DSM 28319 / BCRC 17069 / CCUG 31568 / BM 3577 / RP62A), this protein is N-acetylmuramic acid 6-phosphate etherase.